Here is a 408-residue protein sequence, read N- to C-terminus: tRNA(Ile)-lysidine synthase (408 aa).

ATP is bound at residue 27–32 (SGGGDS).

It belongs to the tRNA(Ile)-lysidine synthase family.

Its subcellular location is the cytoplasm. The catalysed reaction is cytidine(34) in tRNA(Ile2) + L-lysine + ATP = lysidine(34) in tRNA(Ile2) + AMP + diphosphate + H(+). Ligates lysine onto the cytidine present at position 34 of the AUA codon-specific tRNA(Ile) that contains the anticodon CAU, in an ATP-dependent manner. Cytidine is converted to lysidine, thus changing the amino acid specificity of the tRNA from methionine to isoleucine. The chain is tRNA(Ile)-lysidine synthase from Caulobacter vibrioides (strain ATCC 19089 / CIP 103742 / CB 15) (Caulobacter crescentus).